Reading from the N-terminus, the 111-residue chain is Viscotoxin-A3 (111 aa).

The signal sequence occupies residues 1–26; it reads MEVVRGSSLVLLVLLLGALLVSQVES. 3 disulfide bridges follow: C29–C66, C30–C58, and C42–C52. Positions 73-111 are cleaved as a propeptide — acidic domain; it reads FYCTLGCESSQCATNSNGDAEAVRCKTACSDLCQDVDDA.

Belongs to the plant thionin (TC 1.C.44) family.

The protein resides in the secreted. In terms of biological role, thionins are small plant proteins which are toxic to animal cells. They seem to exert their toxic effect at the level of the cell membrane. Their precise function is not known. This Viscum album (European mistletoe) protein is Viscotoxin-A3 (THI2.1).